Consider the following 239-residue polypeptide: uncharacterized protein (239 aa).

It localises to the endoplasmic reticulum. Its subcellular location is the golgi apparatus. This is an uncharacterized protein from Schizosaccharomyces pombe (strain 972 / ATCC 24843) (Fission yeast).